A 390-amino-acid chain; its full sequence is DNA polymerase IV (390 aa).

In terms of domain architecture, UmuC spans 6–187; sequence VMHVDLDAFF…LDISIMPGIG (182 aa). Mg(2+) contacts are provided by Asp-10 and Asp-105. The active site involves Glu-106.

The protein belongs to the DNA polymerase type-Y family. As to quaternary structure, monomer. The cofactor is Mg(2+).

Its subcellular location is the cytoplasm. It catalyses the reaction DNA(n) + a 2'-deoxyribonucleoside 5'-triphosphate = DNA(n+1) + diphosphate. Poorly processive, error-prone DNA polymerase involved in untargeted mutagenesis. Copies undamaged DNA at stalled replication forks, which arise in vivo from mismatched or misaligned primer ends. These misaligned primers can be extended by PolIV. Exhibits no 3'-5' exonuclease (proofreading) activity. May be involved in translesional synthesis, in conjunction with the beta clamp from PolIII. The protein is DNA polymerase IV of Dehalococcoides mccartyi (strain ATCC BAA-2266 / KCTC 15142 / 195) (Dehalococcoides ethenogenes (strain 195)).